The chain runs to 203 residues: Probable nicotinate-nucleotide adenylyltransferase (203 aa).

This sequence belongs to the NadD family.

The catalysed reaction is nicotinate beta-D-ribonucleotide + ATP + H(+) = deamido-NAD(+) + diphosphate. The protein operates within cofactor biosynthesis; NAD(+) biosynthesis; deamido-NAD(+) from nicotinate D-ribonucleotide: step 1/1. Functionally, catalyzes the reversible adenylation of nicotinate mononucleotide (NaMN) to nicotinic acid adenine dinucleotide (NaAD). The protein is Probable nicotinate-nucleotide adenylyltransferase of Clostridium kluyveri (strain ATCC 8527 / DSM 555 / NBRC 12016 / NCIMB 10680 / K1).